We begin with the raw amino-acid sequence, 370 residues long: Protein-glutamate methylesterase/protein-glutamine glutaminase 3 (370 aa).

In terms of domain architecture, Response regulatory spans 3–119; the sequence is KVLIVDDSAL…SLNVSRIERE (117 aa). Asp53 bears the 4-aspartylphosphate mark. In terms of domain architecture, CheB-type methylesterase spans 166 to 360; the sequence is SLTEIGVVLI…GQLNAWMSRT (195 aa). Catalysis depends on residues Ser178, His205, and Asp302.

Belongs to the CheB family. In terms of processing, phosphorylated by CheA. Phosphorylation of the N-terminal regulatory domain activates the methylesterase activity.

The protein localises to the cytoplasm. It catalyses the reaction [protein]-L-glutamate 5-O-methyl ester + H2O = L-glutamyl-[protein] + methanol + H(+). The enzyme catalyses L-glutaminyl-[protein] + H2O = L-glutamyl-[protein] + NH4(+). Its function is as follows. Involved in chemotaxis. Part of a chemotaxis signal transduction system that modulates chemotaxis in response to various stimuli. Catalyzes the demethylation of specific methylglutamate residues introduced into the chemoreceptors (methyl-accepting chemotaxis proteins or MCP) by CheR. Also mediates the irreversible deamidation of specific glutamine residues to glutamic acid. The polypeptide is Protein-glutamate methylesterase/protein-glutamine glutaminase 3 (Rhodospirillum rubrum (strain ATCC 11170 / ATH 1.1.1 / DSM 467 / LMG 4362 / NCIMB 8255 / S1)).